A 646-amino-acid chain; its full sequence is NADP-dependent malic enzyme 4, chloroplastic (646 aa).

The transit peptide at 1–74 directs the protein to the chloroplast; that stretch reads MISLTPSLFL…LETSAADIVP (74 aa). Residue Y194 is the Proton donor of the active site. R247 contributes to the NADP(+) binding site. The Proton acceptor role is filled by K265. 3 residues coordinate a divalent metal cation: E337, D338, and D361. NADP(+)-binding positions include D361, 390-406, and N502; that span reads LFLGAGEAGTGIAELIA.

Belongs to the malic enzymes family. As to quaternary structure, homodimer and homotetramer. It depends on Mg(2+) as a cofactor. The cofactor is Mn(2+). In terms of tissue distribution, expressed in leaves, stems, flowers and roots, mainly in vascular system. In roots, present in the stele, including the vascular tissue and the pericycle, mainly at emerging lateral roots and at root tips.

Its subcellular location is the plastid. The protein localises to the chloroplast. It carries out the reaction (S)-malate + NADP(+) = pyruvate + CO2 + NADPH. The enzyme catalyses oxaloacetate + H(+) = pyruvate + CO2. Its pathway is photosynthesis; C3 acid pathway. Its function is as follows. The chloroplastic ME isoform decarboxylates malate shuttled from neighboring mesophyll cells. The CO(2) released is then refixed by ribulose-bisphosphate carboxylase. This pathway eliminates the photorespiratory loss of CO(2) that occurs in most plants. The polypeptide is NADP-dependent malic enzyme 4, chloroplastic (NADP-ME4) (Arabidopsis thaliana (Mouse-ear cress)).